The primary structure comprises 231 residues: Cytidylate kinase 1 (231 aa).

An ATP-binding site is contributed by 7 to 15; sequence GPSGAGKGT.

Belongs to the cytidylate kinase family. Type 1 subfamily.

Its subcellular location is the cytoplasm. The enzyme catalyses CMP + ATP = CDP + ADP. It catalyses the reaction dCMP + ATP = dCDP + ADP. The sequence is that of Cytidylate kinase 1 from Haemophilus influenzae (strain ATCC 51907 / DSM 11121 / KW20 / Rd).